We begin with the raw amino-acid sequence, 842 residues long: Elongation factor 2 (842 aa).

The 237-residue stretch at 17-253 folds into the tr-type G domain; sequence TNVRNMSVIA…LWGDSYFNPK (237 aa). GTP-binding positions include 26 to 33, 158 to 161, and 213 to 215; these read AHVDHGKS, NKVD, and SGL. Residue His699 is modified to Diphthamide.

This sequence belongs to the TRAFAC class translation factor GTPase superfamily. Classic translation factor GTPase family. EF-G/EF-2 subfamily.

The protein localises to the cytoplasm. The enzyme catalyses GTP + H2O = GDP + phosphate + H(+). Its function is as follows. Catalyzes the GTP-dependent ribosomal translocation step during translation elongation. During this step, the ribosome changes from the pre-translocational (PRE) to the post-translocational (POST) state as the newly formed A-site-bound peptidyl-tRNA and P-site-bound deacylated tRNA move to the P and E sites, respectively. Catalyzes the coordinated movement of the two tRNA molecules, the mRNA and conformational changes in the ribosome. The chain is Elongation factor 2 (EFT1) from Kluyveromyces lactis (strain ATCC 8585 / CBS 2359 / DSM 70799 / NBRC 1267 / NRRL Y-1140 / WM37) (Yeast).